The following is a 106-amino-acid chain: Nucleoid-associated protein BRADO0764 (106 aa).

The protein belongs to the YbaB/EbfC family. As to quaternary structure, homodimer.

Its subcellular location is the cytoplasm. The protein localises to the nucleoid. In terms of biological role, binds to DNA and alters its conformation. May be involved in regulation of gene expression, nucleoid organization and DNA protection. In Bradyrhizobium sp. (strain ORS 278), this protein is Nucleoid-associated protein BRADO0764.